The chain runs to 311 residues: Malate dehydrogenase (311 aa).

Residues 7–13 (GAAGGIG) and Asp-34 contribute to the NAD(+) site. The substrate site is built by Arg-81 and Arg-87. Residues Asn-94 and 117 to 119 (ITN) each bind NAD(+). The substrate site is built by Asn-119 and Arg-153. The active-site Proton acceptor is His-177. Met-227 is an NAD(+) binding site.

It belongs to the LDH/MDH superfamily. MDH type 1 family. Homodimer.

It carries out the reaction (S)-malate + NAD(+) = oxaloacetate + NADH + H(+). Its function is as follows. Catalyzes the reversible oxidation of malate to oxaloacetate. This is Malate dehydrogenase from Aeromonas salmonicida (strain A449).